Consider the following 122-residue polypeptide: Large ribosomal subunit protein uL14c (122 aa).

The protein belongs to the universal ribosomal protein uL14 family. As to quaternary structure, part of the 50S ribosomal subunit.

The protein localises to the plastid. Its subcellular location is the chloroplast. Binds to 23S rRNA. This Liriodendron tulipifera (Tuliptree) protein is Large ribosomal subunit protein uL14c.